Consider the following 501-residue polypeptide: O-phosphoseryl-tRNA(Sec) selenium transferase (501 aa).

The interval 1–44 (MNRESFAAGERLVSPAYVRQGCEARRSHEHLIRLLLEKGKCPEN) is tetramerization. Ser-14 bears the Phosphoserine mark. Pyridoxal 5'-phosphate is bound at residue Arg-75. Residues 96-106 (GRSGDISAVQP) are phosphate loop (P-loop). Positions 97, 98, and 105 each coordinate substrate. Arg-271 provides a ligand contact to tRNA. Lys-284 carries the N6-(pyridoxal phosphate)lysine modification. Residue Arg-313 coordinates substrate. TRNA is bound by residues Arg-398 and Lys-463.

It belongs to the SepSecS family. As to quaternary structure, homotetramer formed by a catalytic dimer and a non-catalytic dimer serving as a binding platform that orients tRNASec for catalysis. Each tetramer binds the CCA ends of two tRNAs which point to the active sites of the catalytic dimer. Requires pyridoxal 5'-phosphate as cofactor.

It localises to the cytoplasm. The catalysed reaction is O-phospho-L-seryl-tRNA(Sec) + selenophosphate + H2O = L-selenocysteinyl-tRNA(Sec) + 2 phosphate. The protein operates within aminoacyl-tRNA biosynthesis; selenocysteinyl-tRNA(Sec) biosynthesis; selenocysteinyl-tRNA(Sec) from L-seryl-tRNA(Sec) (archaeal/eukaryal route): step 2/2. Its function is as follows. Converts O-phosphoseryl-tRNA(Sec) to selenocysteinyl-tRNA(Sec) required for selenoprotein biosynthesis. The sequence is that of O-phosphoseryl-tRNA(Sec) selenium transferase (SEPSECS) from Pongo abelii (Sumatran orangutan).